The sequence spans 637 residues: Sphingomyelin phosphodiesterase B (637 aa).

A signal peptide spans 1-20 (MKVKAPILLLFVFLINFCFS). N-linked (GlcNAc...) asparagine glycosylation is present at asparagine 73. One can recognise a Saposin B-type domain in the interval 73 to 155 (NGTKCDICKF…GFVGFCPYVP (83 aa)). 3 cysteine pairs are disulfide-bonded: cysteine 77/cysteine 151, cysteine 80/cysteine 145, and cysteine 108/cysteine 119. N-linked (GlcNAc...) asparagine glycosylation is found at asparagine 128 and asparagine 157. Zn(2+) is bound by residues aspartate 191 and histidine 193. A disulfide bridge links cysteine 212 with cysteine 233. Aspartate 263 contacts Zn(2+). An N-linked (GlcNAc...) asparagine glycan is attached at asparagine 279. Residue asparagine 304 coordinates Zn(2+). Asparagine 377 carries an N-linked (GlcNAc...) asparagine glycan. Residues histidine 407, histidine 441, and histidine 443 each coordinate Zn(2+). Residues asparagine 523 and asparagine 546 are each glycosylated (N-linked (GlcNAc...) asparagine). Cysteine 582 and cysteine 595 form a disulfide bridge. Asparagine 606 carries an N-linked (GlcNAc...) asparagine glycan.

It belongs to the acid sphingomyelinase family. Zn(2+) serves as cofactor.

It localises to the secreted. Converts sphingomyelin to ceramide. This is Sphingomyelin phosphodiesterase B (sgmB) from Dictyostelium discoideum (Social amoeba).